Reading from the N-terminus, the 403-residue chain is Phosphoglycerate kinase (403 aa).

Substrate is bound by residues 21–23 (DFN), R36, 59–62 (HLGR), R119, and R154. Residues K207, G299, E330, and 357–360 (GGDA) contribute to the ATP site.

Belongs to the phosphoglycerate kinase family. In terms of assembly, monomer.

It is found in the cytoplasm. It catalyses the reaction (2R)-3-phosphoglycerate + ATP = (2R)-3-phospho-glyceroyl phosphate + ADP. Its pathway is carbohydrate degradation; glycolysis; pyruvate from D-glyceraldehyde 3-phosphate: step 2/5. The sequence is that of Phosphoglycerate kinase from Chlamydia caviae (strain ATCC VR-813 / DSM 19441 / 03DC25 / GPIC) (Chlamydophila caviae).